A 349-amino-acid polypeptide reads, in one-letter code: Acyl-CoA Delta(11) desaturase (349 aa).

A run of 2 helical transmembrane segments spans residues 41–61 and 66–86; these read FLTFSYAHLAALYGLYLCFTS and TLLFSFVLFHMSNIGITAGAH. The Histidine box-1 motif lies at 86–91; that stretch reads HRLWTH. The short motif at 123–127 is the Histidine box-2 element; that stretch reads HRLHH. A helical transmembrane segment spans residues 184-204; sequence AVPLIGTVCFALPTLIPVYCW. The Histidine box-3 motif lies at 263–267; it reads HNYHH. Residues 282–302 traverse the membrane as a helical segment; the sequence is FLNLTTLFIDFCAWFGWAYDL.

Belongs to the fatty acid desaturase type 1 family. Fe cation serves as cofactor. Adult female pheromone gland. Increases by two or three orders of magnitude during the first 2 days after adult eclosion.

Its subcellular location is the endoplasmic reticulum membrane. The enzyme catalyses an 11,12-saturated fatty acyl-CoA + 2 Fe(II)-[cytochrome b5] + O2 + 2 H(+) = an (11Z)-Delta(11)-fatty acyl-CoA + 2 Fe(III)-[cytochrome b5] + 2 H2O. Catalyzes the formation of Delta(11) fatty acyl precursors in the pheromone gland. In Trichoplusia ni (Cabbage looper), this protein is Acyl-CoA Delta(11) desaturase (D11DS).